The chain runs to 2149 residues: Polyketide synthase 1 (2149 aa).

The N-terminal acylcarrier protein transacylase domain (SAT) stretch occupies residues 19 to 261 (FIFGDQSSCN…TRLAVHAPYH (243 aa)). A Ketosynthase family 3 (KS3) domain is found at 394-829 (ESKIAIIGMS…GGNTALLVED (436 aa)). Active-site for beta-ketoacyl synthase activity residues include cysteine 566, histidine 701, and histidine 745. Residues 929–1233 (AFVFSGQGSQ…PSLMRNKDGW (305 aa)) form a malonyl-CoA:ACP transacylase (MAT) domain region. The active-site For acyl/malonyl transferase activity is the serine 1018. Positions 1310–1624 (TASVHRIVHE…RKVLNTAMPP (315 aa)) are product template (PT) domain. The N-terminal hotdog fold stretch occupies residues 1314–1447 (HRIVHESVDK…SSLHFERPKV (134 aa)). The PKS/mFAS DH domain occupies 1314–1619 (HRIVHESVDK…FQGIPRKVLN (306 aa)). Histidine 1346 acts as the Proton acceptor; for dehydratase activity in catalysis. Residues 1474–1619 (LNSRMSSGVI…FQGIPRKVLN (146 aa)) form a C-terminal hotdog fold region. Aspartate 1533 acts as the Proton donor; for dehydratase activity in catalysis. The segment at 1619-1657 (NTAMPPPKSQNEAPVRSAPAKPAAKPPKSASSEHSGHFA) is disordered. Over residues 1635–1650 (SAPAKPAAKPPKSASS) the composition is skewed to low complexity. Residues 1678 to 1752 (RNPMLAVFKI…DLATHLGLDT (75 aa)) form the Carrier 1 domain. O-(pantetheine 4'-phosphoryl)serine is present on serine 1712. Positions 1755–1790 (SDQSSGQSSSSGGLSPRSDSIGEITSSATTPPSLSP) are enriched in low complexity. The interval 1755-1796 (SDQSSGQSSSSGGLSPRSDSIGEITSSATTPPSLSPRGSVSG) is disordered. The region spanning 1793–1870 (SVSGSQCKDV…SFKHMFQQGH (78 aa)) is the Carrier 2 domain. Position 1830 is an O-(pantetheine 4'-phosphoryl)serine (serine 1830). The interval 1882 to 2147 (LKQYRATSTL…ERVAAFIRST (266 aa)) is thioesterase (TE) domain. The For thioesterase activity role is filled by serine 1973.

In terms of biological role, polyketide synthase; part of the Pks1 gene cluster that mediates the biosynthesis of an anthraquinone derivative pigment that contributes to conidial pigmentation that provides protection from UV radiation, heat and cold stress. The polyketide synthase Pks1 produces 1-acetyl-2,4,6,8-tetrahydroxy-9,10-anthraquinone though condensation of acetyl-CoA with malonyl-CoA. The dehydratase EthD and the laccase Mlac1 further convert the anthraquinone derivative into the final conidial pigment. In Metarhizium majus (strain ARSEF 297), this protein is Polyketide synthase 1.